We begin with the raw amino-acid sequence, 151 residues long: Deoxyuridine 5'-triphosphate nucleotidohydrolase (151 aa).

Substrate is bound by residues 70-72, asparagine 83, 87-89, and methionine 97; these read RSG and LID.

The protein belongs to the dUTPase family. It depends on Mg(2+) as a cofactor.

It catalyses the reaction dUTP + H2O = dUMP + diphosphate + H(+). It functions in the pathway pyrimidine metabolism; dUMP biosynthesis; dUMP from dCTP (dUTP route): step 2/2. Its function is as follows. This enzyme is involved in nucleotide metabolism: it produces dUMP, the immediate precursor of thymidine nucleotides and it decreases the intracellular concentration of dUTP so that uracil cannot be incorporated into DNA. This chain is Deoxyuridine 5'-triphosphate nucleotidohydrolase, found in Pseudomonas aeruginosa (strain LESB58).